Reading from the N-terminus, the 436-residue chain is Histidine--tRNA ligase (436 aa).

This sequence belongs to the class-II aminoacyl-tRNA synthetase family. Homodimer.

It is found in the cytoplasm. It catalyses the reaction tRNA(His) + L-histidine + ATP = L-histidyl-tRNA(His) + AMP + diphosphate + H(+). The sequence is that of Histidine--tRNA ligase from Prochlorococcus marinus (strain MIT 9303).